Here is a 556-residue protein sequence, read N- to C-terminus: Glutamine--tRNA ligase (556 aa).

The short motif at 34–44 (PEPNGYLHIGH) is the 'HIGH' region element. ATP is bound by residues 35-37 (EPN) and 41-47 (HIGHAKS). L-glutamine contacts are provided by D67 and Y212. Residues T231, 261 to 262 (RL), and 269 to 271 (MSK) each bind ATP. The 'KMSKS' region motif lies at 268–272 (VMSKR).

It belongs to the class-I aminoacyl-tRNA synthetase family. In terms of assembly, monomer.

The protein resides in the cytoplasm. The enzyme catalyses tRNA(Gln) + L-glutamine + ATP = L-glutaminyl-tRNA(Gln) + AMP + diphosphate. The chain is Glutamine--tRNA ligase from Vibrio cholerae serotype O1 (strain ATCC 39315 / El Tor Inaba N16961).